Reading from the N-terminus, the 116-residue chain is Methionine-R-sulfoxide reductase B1 (116 aa).

A MsrB domain is found at 1–106; the sequence is MSFCSFFGGE…FSSSLKFIPK (106 aa). Zn(2+)-binding residues include Cys-23, Cys-26, Cys-71, and Cys-74. The active-site Nucleophile is Sec-95. Sec-95 is a non-standard amino acid (selenocysteine).

Belongs to the MsrB Met sulfoxide reductase family. Requires Zn(2+) as cofactor. Truncated MSRB1/SEPX1 proteins produced by failed UGA/Sec decoding are ubiquitinated by the CRL2(FEM1C) E3 ubiquitin-protein ligase complex.

The protein resides in the cytoplasm. Its subcellular location is the nucleus. It localises to the cytoskeleton. It carries out the reaction L-methionyl-[protein] + [thioredoxin]-disulfide + H2O = L-methionyl-(R)-S-oxide-[protein] + [thioredoxin]-dithiol. The catalysed reaction is [thioredoxin]-disulfide + L-methionine + H2O = L-methionine (R)-S-oxide + [thioredoxin]-dithiol. In terms of biological role, methionine-sulfoxide reductase that specifically reduces methionine (R)-sulfoxide back to methionine. While in many cases, methionine oxidation is the result of random oxidation following oxidative stress, methionine oxidation is also a post-translational modification that takes place on specific residue. Acts as a regulator of actin assembly by reducing methionine (R)-sulfoxide mediated by MICALs (MICAL1, MICAL2 or MICAL3) on actin, thereby promoting filament repolymerization. Plays a role in innate immunity by reducing oxidized actin, leading to actin repolymerization in macrophages. The protein is Methionine-R-sulfoxide reductase B1 (Msrb1) of Rattus norvegicus (Rat).